The sequence spans 690 residues: MAKKKSEEHSGADANDSDYQEEPNFEDPPGFVDNISDEDLLGDMLAQRPSEADGVESVVVVDNIPKVEPERLDKLKSVINKLFSNYGDIVNVVYPVDEDGKTKGYAFMEYKQASQAEEAVKKLNNHRLDKNHTFAVNLFTDFQKYENIPEKWEPPTVQTFKVQSDLYNFINDPDTYDQYCVAAETAQNCVQVGFWQNVLPEPFELETRERFTDTFVKWSPLGTYVVTFHKPGVAIWGGSSFQKIQKFPHPGTQFVEFSPCENYLVTYGPTPTGQKIIIWDIRTGAEKRSFVADGMSVLSMFRWSHDDKFVARMGENSIHIYETPSFFLLDLKSIKIPGIRGFSWSPTDNVIAYWVEEQNQIPARVTLMEIPKKREIRNKNLFHVADCKLHWQKSGDYLCVKVDRYSKLKKDKKDLDVKFLGMFYNFEIFHMREKEIPVDSVEIRELILAFAWEPIGNKFSIIHGEPNSSNVSFYEVNKGVKPSLVKRLEKKSCTHLFWSPRGQFIVMANLTMGTFEFVDSTNDYIISASPDHFRASEVEWDPTGRYVVTGVSSWKVKEDTGFNMYTFQGRIIKRTILKNFVQFLWRPRPPTLLSEEKQKEIKKNLKKYYAAFEQKDRLRLTRASKELLEKRSQLRETFMEYRNKRIAEWADQKSRRIMLRGHVDTDNLETDEVDEEIVEFLVKEEVTLLE.

Positions 1–11 are enriched in basic and acidic residues; sequence MAKKKSEEHSG. A disordered region spans residues 1 to 36; sequence MAKKKSEEHSGADANDSDYQEEPNFEDPPGFVDNIS. The segment covering 15–25 has biased composition (acidic residues); that stretch reads NDSDYQEEPNF. One can recognise an RRM domain in the interval 57–141; it reads SVVVVDNIPK…HTFAVNLFTD (85 aa). WD repeat units lie at residues 207–246, 293–331, 334–369, 442–484, and 530–575; these read TRER…KIQK, DGMS…LLDL, IKIP…TLME, EIRE…KPSL, and PDHF…IKRT. Residues 595–645 are a coiled coil; sequence EEKQKEIKKNLKKYYAAFEQKDRLRLTRASKELLEKRSQLRETFMEYRNKR.

Belongs to the eIF-3 subunit B family. In terms of assembly, component of the eukaryotic translation initiation factor 3 (eIF-3) complex. The eIF-3 complex interacts with pix. Interacts with mxt.

The protein resides in the cytoplasm. Its function is as follows. RNA-binding component of the eukaryotic translation initiation factor 3 (eIF-3) complex, which is involved in protein synthesis of a specialized repertoire of mRNAs and, together with other initiation factors, stimulates binding of mRNA and methionyl-tRNAi to the 40S ribosome. The eIF-3 complex specifically targets and initiates translation of a subset of mRNAs involved in cell proliferation. This Drosophila yakuba (Fruit fly) protein is Eukaryotic translation initiation factor 3 subunit B.